Here is a 416-residue protein sequence, read N- to C-terminus: Enterobactin exporter EntS (416 aa).

At 1–21 the chain is on the cytoplasmic side; the sequence is MNKQSWLLNLSLLKTHPAFRA. A helical transmembrane segment spans residues 22–42; it reads VFLARFISIVSLGLLGVAVPV. The Periplasmic portion of the chain corresponds to 43 to 55; the sequence is QIQMMTHSTWLVG. A helical transmembrane segment spans residues 56 to 76; sequence LSVTLTGGAMFVGLMVGGVLA. The Cytoplasmic portion of the chain corresponds to 77–83; that stretch reads DRYERKK. Residues 84–104 form a helical membrane-spanning segment; it reads VILLARGTCGIGFIGLCLNAL. The Periplasmic portion of the chain corresponds to 105–109; the sequence is LPEPS. The helical transmembrane segment at 110–130 threads the bilayer; that stretch reads LLAIYLLGLWDGFFASLGVTA. Residues 131–156 lie on the Cytoplasmic side of the membrane; the sequence is LLAATPALVGRENLMQAGAITMLTVR. Residues 157–177 form a helical membrane-spanning segment; it reads LGSVISPMIGGLLLATGGVAW. Residue Asn178 is a topological domain, periplasmic. Residues 179 to 199 form a helical membrane-spanning segment; it reads YGLAAAGTFITLLPLLSLPAL. Over 200–218 the chain is Cytoplasmic; that stretch reads PPPPQPREHPLKSLLAGFR. A helical transmembrane segment spans residues 219–239; sequence FLLASPLVGGIALLGGLLTMA. Over 240–256 the chain is Periplasmic; the sequence is SAVRVLYPALADNWQMS. The helical transmembrane segment at 257-277 threads the bilayer; sequence AAEIGFLYAAIPLGAAIGALT. The Cytoplasmic portion of the chain corresponds to 278–287; it reads SGKLAHSARP. Residues 288 to 307 form a helical membrane-spanning segment; that stretch reads GLLMLLSTLGSFLAIGLFGL. The Periplasmic portion of the chain corresponds to 308–313; sequence MPMWIL. The helical transmembrane segment at 314 to 336 threads the bilayer; it reads GVVCLALFGWLSAVSSLLQYTML. Residues 337 to 356 lie on the Cytoplasmic side of the membrane; sequence QTQTPEAMLGRINGLWTAQN. A helical transmembrane segment spans residues 357–377; it reads VTGDAIGAALLGGLGAMMTPV. A topological domain (periplasmic) is located at residue Ala378. The chain crosses the membrane as a helical span at residues 379-399; it reads SASASGFGLLIIGVLLLLVLV. The Cytoplasmic segment spans residues 400-416; it reads ELRRFRQTPPQVTASDS.

Belongs to the major facilitator superfamily. EntS (TC 2.A.1.38) family.

The protein localises to the cell inner membrane. Component of an export pathway for enterobactin. The polypeptide is Enterobactin exporter EntS (Shigella boydii serotype 4 (strain Sb227)).